The following is a 290-amino-acid chain: 4-hydroxybenzoate octaprenyltransferase (290 aa).

6 consecutive transmembrane segments (helical) span residues 41–61, 89–109, 133–153, 158–178, 202–224, and 269–289; these read WPLLAIFALGTLLMRSAGCAM, WEAVAIAVVLAFISFLLIQPL, FFAIPQAYLGIAFGFGIPMAF, DTVPMLAWVMLIANIFWSVAY, FGRFDVAAVMLCYAATLGIYVWI, and WLGGVLFAGIAAHYLLAGTAG.

Belongs to the UbiA prenyltransferase family. Mg(2+) serves as cofactor.

Its subcellular location is the cell inner membrane. It catalyses the reaction all-trans-octaprenyl diphosphate + 4-hydroxybenzoate = 4-hydroxy-3-(all-trans-octaprenyl)benzoate + diphosphate. It participates in cofactor biosynthesis; ubiquinone biosynthesis. Catalyzes the prenylation of para-hydroxybenzoate (PHB) with an all-trans polyprenyl group. Mediates the second step in the final reaction sequence of ubiquinone-8 (UQ-8) biosynthesis, which is the condensation of the polyisoprenoid side chain with PHB, generating the first membrane-bound Q intermediate 3-octaprenyl-4-hydroxybenzoate. The chain is 4-hydroxybenzoate octaprenyltransferase from Burkholderia ambifaria (strain MC40-6).